The primary structure comprises 421 residues: Histone-lysine N-methyltransferase SUV39H1 (421 aa).

Positions 46–104 (FEVEYLWNYKKVQDQELYLVKWKYYPDSESTWEPRHHLKCNNLLKQFHLDLERELLRRA) constitute a Chromo domain. The 61-residue stretch at 189–249 (AGCKCRDCFS…SCPNRVVQKG (61 aa)) folds into the Pre-SET domain. Zn(2+) is bound by residues cysteine 191, cysteine 193, cysteine 196, cysteine 203, cysteine 204, cysteine 231, cysteine 235, cysteine 237, and cysteine 241. Positions 252-375 (YKFCIFRTSD…TGEELTFDYN (124 aa)) constitute an SET domain. S-adenosyl-L-methionine contacts are provided by residues 263-265 (RGW), tyrosine 306, and 332-333 (NH). Residues cysteine 335, cysteine 409, cysteine 411, and cysteine 416 each coordinate Zn(2+). One can recognise a Post-SET domain in the interval 405–421 (VRVECKCGVSSCRKYLF).

The protein belongs to the class V-like SAM-binding methyltransferase superfamily. Histone-lysine methyltransferase family. Suvar3-9 subfamily.

The protein resides in the nucleus. It localises to the chromosome. It is found in the centromere. The catalysed reaction is L-lysyl(9)-[histone H3] + 3 S-adenosyl-L-methionine = N(6),N(6),N(6)-trimethyl-L-lysyl(9)-[histone H3] + 3 S-adenosyl-L-homocysteine + 3 H(+). Histone methyltransferase that specifically trimethylates 'Lys-9' of histone H3 using monomethylated H3 'Lys-9' as substrate. H3 'Lys-9' trimethylation represents a specific tag for epigenetic transcriptional repression by recruiting HP1 (CBX1, CBX3 and/or CBX5) proteins to methylated histones. Mainly functions in heterochromatin regions, thereby playing a central role in the establishment of constitutive heterochromatin at pericentric and telomere regions. H3 'Lys-9' trimethylation is also required to direct DNA methylation at pericentric repeats. SUV39H1 is targeted to histone H3 via its interaction with RB1 and is involved in many processes. The protein is Histone-lysine N-methyltransferase SUV39H1 (suv39h1) of Xenopus laevis (African clawed frog).